Consider the following 494-residue polypeptide: Cobyric acid synthase (494 aa).

One can recognise a GATase cobBQ-type domain in the interval 248–445 (ELEIAVLKLP…LHGIFDNGPW (198 aa)). C329 functions as the Nucleophile in the catalytic mechanism. The active site involves H437.

The protein belongs to the CobB/CobQ family. CobQ subfamily.

The protein operates within cofactor biosynthesis; adenosylcobalamin biosynthesis. Catalyzes amidations at positions B, D, E, and G on adenosylcobyrinic A,C-diamide. NH(2) groups are provided by glutamine, and one molecule of ATP is hydrogenolyzed for each amidation. The sequence is that of Cobyric acid synthase from Synechococcus sp. (strain WH7803).